The sequence spans 217 residues: ATP phosphoribosyltransferase (217 aa).

It belongs to the ATP phosphoribosyltransferase family. Short subfamily. Heteromultimer composed of HisG and HisZ subunits.

The protein localises to the cytoplasm. It carries out the reaction 1-(5-phospho-beta-D-ribosyl)-ATP + diphosphate = 5-phospho-alpha-D-ribose 1-diphosphate + ATP. It participates in amino-acid biosynthesis; L-histidine biosynthesis; L-histidine from 5-phospho-alpha-D-ribose 1-diphosphate: step 1/9. Functionally, catalyzes the condensation of ATP and 5-phosphoribose 1-diphosphate to form N'-(5'-phosphoribosyl)-ATP (PR-ATP). Has a crucial role in the pathway because the rate of histidine biosynthesis seems to be controlled primarily by regulation of HisG enzymatic activity. This is ATP phosphoribosyltransferase from Prochlorococcus marinus (strain MIT 9313).